A 690-amino-acid polypeptide reads, in one-letter code: Lipase 2 (690 aa).

Positions 1 to 37 (MLRGQEERKYSIRKYSIGVVSVLAATMFVVSSHEAQA) are cleaved as a signal peptide. A compositionally biased stretch (polar residues) spans 52–71 (LNQPGEQGNAITSHQMQSGK). The segment at 52 to 266 (LNQPGEQGNA…KPTDKNTDNK (215 aa)) is disordered. Basic and acidic residues predominate over residues 72–81 (QLDDMHKENG). Polar residues-rich tracts occupy residues 82 to 114 (KSGT…NDNQ), 124 to 171 (SKQS…QPSI), and 185 to 206 (PTST…AQDA). Composition is skewed to basic and acidic residues over residues 225–237 (IDAK…RQSE) and 257–266 (KPTDKNTDNK). Residues Ser412 and His645 each act as charge relay system in the active site.

It belongs to the AB hydrolase superfamily. Lipase family.

It localises to the secreted. It catalyses the reaction a triacylglycerol + H2O = a diacylglycerol + a fatty acid + H(+). The chain is Lipase 2 (lip2) from Staphylococcus aureus (strain NCTC 8325 / PS 47).